Consider the following 1386-residue polypeptide: DNA-directed RNA polymerase subunit beta (1386 aa).

Belongs to the RNA polymerase beta chain family. In terms of assembly, in plastids the minimal PEP RNA polymerase catalytic core is composed of four subunits: alpha, beta, beta', and beta''. When a (nuclear-encoded) sigma factor is associated with the core the holoenzyme is formed, which can initiate transcription.

It localises to the plastid. The protein localises to the chloroplast. It catalyses the reaction RNA(n) + a ribonucleoside 5'-triphosphate = RNA(n+1) + diphosphate. Functionally, DNA-dependent RNA polymerase catalyzes the transcription of DNA into RNA using the four ribonucleoside triphosphates as substrates. The sequence is that of DNA-directed RNA polymerase subunit beta from Thalassiosira pseudonana (Marine diatom).